Consider the following 144-residue polypeptide: Universal stress protein A (144 aa).

It belongs to the universal stress protein A family. As to quaternary structure, homodimer.

It is found in the cytoplasm. Required for resistance to DNA-damaging agents. The polypeptide is Universal stress protein A (uspA) (Salmonella typhimurium (strain LT2 / SGSC1412 / ATCC 700720)).